We begin with the raw amino-acid sequence, 80 residues long: WAP four-disulfide core domain protein 15B (80 aa).

Positions 1–20 are cleaved as a signal peptide; the sequence is MKLLGLSLLAVTILLCCNMA. The WAP domain maps to 29–76; the sequence is VFSKPGYCPEYRVPCPFVLIPKCRRDKGCKDALKCCFFYCQMRCVDPW. Intrachain disulfides connect C36-C64, C43-C68, C51-C63, and C57-C72.

As to expression, constitutively expressed in kidney and epididymis.

It is found in the secreted. Functionally, antibacterial protein which inhibits the growth of E.coli and S.aureus. The sequence is that of WAP four-disulfide core domain protein 15B (Wfdc15b) from Mus musculus (Mouse).